The sequence spans 142 residues: ATP synthase epsilon chain (142 aa).

Belongs to the ATPase epsilon chain family. F-type ATPases have 2 components, CF(1) - the catalytic core - and CF(0) - the membrane proton channel. CF(1) has five subunits: alpha(3), beta(3), gamma(1), delta(1), epsilon(1). CF(0) has three main subunits: a, b and c.

The protein localises to the cell inner membrane. Its function is as follows. Produces ATP from ADP in the presence of a proton gradient across the membrane. The chain is ATP synthase epsilon chain from Koribacter versatilis (strain Ellin345).